Consider the following 241-residue polypeptide: Pyridoxine 5'-phosphate synthase (241 aa).

Asn7 contacts 3-amino-2-oxopropyl phosphate. 9-10 contacts 1-deoxy-D-xylulose 5-phosphate; sequence DH. Position 18 (Arg18) interacts with 3-amino-2-oxopropyl phosphate. Catalysis depends on His43, which acts as the Proton acceptor. Positions 45 and 50 each coordinate 1-deoxy-D-xylulose 5-phosphate. The active-site Proton acceptor is the Glu70. Thr100 serves as a coordination point for 1-deoxy-D-xylulose 5-phosphate. Catalysis depends on His190, which acts as the Proton donor. Residues Gly191 and 212–213 each bind 3-amino-2-oxopropyl phosphate; that span reads GH.

It belongs to the PNP synthase family. As to quaternary structure, homooctamer; tetramer of dimers.

Its subcellular location is the cytoplasm. The enzyme catalyses 3-amino-2-oxopropyl phosphate + 1-deoxy-D-xylulose 5-phosphate = pyridoxine 5'-phosphate + phosphate + 2 H2O + H(+). The protein operates within cofactor biosynthesis; pyridoxine 5'-phosphate biosynthesis; pyridoxine 5'-phosphate from D-erythrose 4-phosphate: step 5/5. Functionally, catalyzes the complicated ring closure reaction between the two acyclic compounds 1-deoxy-D-xylulose-5-phosphate (DXP) and 3-amino-2-oxopropyl phosphate (1-amino-acetone-3-phosphate or AAP) to form pyridoxine 5'-phosphate (PNP) and inorganic phosphate. This Bordetella avium (strain 197N) protein is Pyridoxine 5'-phosphate synthase.